A 278-amino-acid chain; its full sequence is ATP synthase subunit delta (278 aa).

It belongs to the ATPase delta chain family. In terms of assembly, F-type ATPases have 2 components, F(1) - the catalytic core - and F(0) - the membrane proton channel. F(1) has five subunits: alpha(3), beta(3), gamma(1), delta(1), epsilon(1). F(0) has three main subunits: a(1), b(2) and c(10-14). The alpha and beta chains form an alternating ring which encloses part of the gamma chain. F(1) is attached to F(0) by a central stalk formed by the gamma and epsilon chains, while a peripheral stalk is formed by the delta and b chains.

The protein localises to the cell membrane. Its function is as follows. F(1)F(0) ATP synthase produces ATP from ADP in the presence of a proton or sodium gradient. F-type ATPases consist of two structural domains, F(1) containing the extramembraneous catalytic core and F(0) containing the membrane proton channel, linked together by a central stalk and a peripheral stalk. During catalysis, ATP synthesis in the catalytic domain of F(1) is coupled via a rotary mechanism of the central stalk subunits to proton translocation. This protein is part of the stalk that links CF(0) to CF(1). It either transmits conformational changes from CF(0) to CF(1) or is implicated in proton conduction. The sequence is that of ATP synthase subunit delta from Rhodococcus opacus (strain B4).